The sequence spans 639 residues: Chaperone protein HtpG (639 aa).

The segment at 1 to 347 (MSQQETHGFQ…SNDLPLNVSR (347 aa)) is a; substrate-binding. Residues 348–564 (EILQDNKVTT…EGEMSTQMIK (217 aa)) are b. The tract at residues 565 to 639 (LMQAAGQDVP…MNQMLLASVK (75 aa)) is c.

Belongs to the heat shock protein 90 family. Homodimer.

The protein resides in the cytoplasm. Molecular chaperone. Has ATPase activity. The sequence is that of Chaperone protein HtpG from Shewanella halifaxensis (strain HAW-EB4).